Here is a 317-residue protein sequence, read N- to C-terminus: Porphobilinogen deaminase (317 aa).

The residue at position 245 (C245) is an S-(dipyrrolylmethanemethyl)cysteine.

It belongs to the HMBS family. In terms of assembly, monomer. Dipyrromethane is required as a cofactor.

The enzyme catalyses 4 porphobilinogen + H2O = hydroxymethylbilane + 4 NH4(+). The protein operates within porphyrin-containing compound metabolism; protoporphyrin-IX biosynthesis; coproporphyrinogen-III from 5-aminolevulinate: step 2/4. Its pathway is porphyrin-containing compound metabolism; chlorophyll biosynthesis. Tetrapolymerization of the monopyrrole PBG into the hydroxymethylbilane pre-uroporphyrinogen in several discrete steps. The protein is Porphobilinogen deaminase of Synechococcus sp. (strain CC9605).